The sequence spans 104 residues: Co-chaperonin GroES 5 (104 aa).

Belongs to the GroES chaperonin family. In terms of assembly, heptamer of 7 subunits arranged in a ring. Interacts with the chaperonin GroEL.

The protein localises to the cytoplasm. Its function is as follows. Together with the chaperonin GroEL, plays an essential role in assisting protein folding. The GroEL-GroES system forms a nano-cage that allows encapsulation of the non-native substrate proteins and provides a physical environment optimized to promote and accelerate protein folding. GroES binds to the apical surface of the GroEL ring, thereby capping the opening of the GroEL channel. The chain is Co-chaperonin GroES 5 from Rhizobium meliloti (strain 1021) (Ensifer meliloti).